A 338-amino-acid chain; its full sequence is Glycerol-3-phosphate dehydrogenase [NAD(P)+] (338 aa).

The NADPH site is built by Trp-12, His-33, and Lys-110. Sn-glycerol 3-phosphate contacts are provided by Lys-110, Gly-142, and Ser-144. An NADPH-binding site is contributed by Ala-146. The sn-glycerol 3-phosphate site is built by Lys-197, Asp-250, Ser-260, Arg-261, and Asn-262. The active-site Proton acceptor is Lys-197. Arg-261 contributes to the NADPH binding site. NADPH contacts are provided by Val-286 and Glu-288.

Belongs to the NAD-dependent glycerol-3-phosphate dehydrogenase family.

It localises to the cytoplasm. The catalysed reaction is sn-glycerol 3-phosphate + NAD(+) = dihydroxyacetone phosphate + NADH + H(+). The enzyme catalyses sn-glycerol 3-phosphate + NADP(+) = dihydroxyacetone phosphate + NADPH + H(+). Its pathway is membrane lipid metabolism; glycerophospholipid metabolism. Catalyzes the reduction of the glycolytic intermediate dihydroxyacetone phosphate (DHAP) to sn-glycerol 3-phosphate (G3P), the key precursor for phospholipid synthesis. The sequence is that of Glycerol-3-phosphate dehydrogenase [NAD(P)+] from Acidobacterium capsulatum (strain ATCC 51196 / DSM 11244 / BCRC 80197 / JCM 7670 / NBRC 15755 / NCIMB 13165 / 161).